Here is a 160-residue protein sequence, read N- to C-terminus: MLVLLAGLFVVHIATAIMLFVSTIANVWMVADGIDSSIGLWKNCTSGSCDGSLSYGNDDAIKAVQAFMILSIIFSIISLVVFVFQLFTMEKGNRFFLSGSTMLVCWLCILIGVSIYTHHYAHSEGNFFPSSHQGYCFILTWICFCFSFIIGILYMVLRKK.

The helical transmembrane segment at 1–21 (MLVLLAGLFVVHIATAIMLFV) threads the bilayer. A glycan (N-linked (GlcNAc...) asparagine) is linked at Asn-43. 3 helical membrane-spanning segments follow: residues 67-87 (FMIL…FQLF), 95-115 (FFLS…GVSI), and 137-157 (FILT…YMVL).

Belongs to the PMP-22/EMP/MP20 family. In terms of tissue distribution, most prominently found in the gastrointestinal tract, skin, lung, and brain but not in liver.

Its subcellular location is the membrane. This is Epithelial membrane protein 1 (Emp1) from Rattus norvegicus (Rat).